Here is a 172-residue protein sequence, read N- to C-terminus: GTP-dependent dephospho-CoA kinase (172 aa).

Asp40, Val41, Val42, Asp59, and Glu112 together coordinate GTP.

This sequence belongs to the GTP-dependent DPCK family.

The catalysed reaction is 3'-dephospho-CoA + GTP = GDP + CoA + H(+). It functions in the pathway cofactor biosynthesis; coenzyme A biosynthesis. Its function is as follows. Catalyzes the GTP-dependent phosphorylation of the 3'-hydroxyl group of dephosphocoenzyme A to form coenzyme A (CoA). This is GTP-dependent dephospho-CoA kinase from Methanospirillum hungatei JF-1 (strain ATCC 27890 / DSM 864 / NBRC 100397 / JF-1).